Here is a 348-residue protein sequence, read N- to C-terminus: Protein RecA (348 aa).

64–71 provides a ligand contact to ATP; it reads GPESSGKT. Positions 324-335 are enriched in basic and acidic residues; that stretch reads EYEIDGSNKEPL. The segment at 324-348 is disordered; that stretch reads EYEIDGSNKEPLAETEETLSLLDDE. Over residues 336–348 the composition is skewed to acidic residues; the sequence is AETEETLSLLDDE.

Belongs to the RecA family.

It is found in the cytoplasm. Can catalyze the hydrolysis of ATP in the presence of single-stranded DNA, the ATP-dependent uptake of single-stranded DNA by duplex DNA, and the ATP-dependent hybridization of homologous single-stranded DNAs. It interacts with LexA causing its activation and leading to its autocatalytic cleavage. This chain is Protein RecA, found in Listeria ivanovii.